We begin with the raw amino-acid sequence, 821 residues long: Ent-isokaur-15-ene synthase (821 aa).

Aspartate 556, aspartate 560, asparagine 701, threonine 705, and glutamate 709 together coordinate Mg(2+). A DDXXD motif motif is present at residues 556 to 560 (DDFFD).

This sequence belongs to the terpene synthase family. Requires Mg(2+) as cofactor.

It carries out the reaction ent-copalyl diphosphate = ent-isokaurene + diphosphate. Its pathway is secondary metabolite biosynthesis; terpenoid biosynthesis. Functionally, involved in the biosynthesis of ent-kaurene diterpenoids natural products. Catalyzes the conversion of ent-copalyl diphosphate to the phytoalexin precursor ent-isokaur-15-ene. In Oryza sativa subsp. indica (Rice), this protein is Ent-isokaur-15-ene synthase.